The chain runs to 526 residues: Bifunctional purine biosynthesis protein PurH (526 aa).

Residues 1 to 145 form the MGS-like domain; it reads MIRTALLSVS…KNHQDVTVLI (145 aa).

This sequence belongs to the PurH family.

It carries out the reaction (6R)-10-formyltetrahydrofolate + 5-amino-1-(5-phospho-beta-D-ribosyl)imidazole-4-carboxamide = 5-formamido-1-(5-phospho-D-ribosyl)imidazole-4-carboxamide + (6S)-5,6,7,8-tetrahydrofolate. The enzyme catalyses IMP + H2O = 5-formamido-1-(5-phospho-D-ribosyl)imidazole-4-carboxamide. Its pathway is purine metabolism; IMP biosynthesis via de novo pathway; 5-formamido-1-(5-phospho-D-ribosyl)imidazole-4-carboxamide from 5-amino-1-(5-phospho-D-ribosyl)imidazole-4-carboxamide (10-formyl THF route): step 1/1. It functions in the pathway purine metabolism; IMP biosynthesis via de novo pathway; IMP from 5-formamido-1-(5-phospho-D-ribosyl)imidazole-4-carboxamide: step 1/1. This Polynucleobacter asymbioticus (strain DSM 18221 / CIP 109841 / QLW-P1DMWA-1) (Polynucleobacter necessarius subsp. asymbioticus) protein is Bifunctional purine biosynthesis protein PurH.